We begin with the raw amino-acid sequence, 1160 residues long: Nck-associated protein 1 homolog (1160 aa).

The protein belongs to the HEM-1/HEM-2 family. In terms of assembly, part of a Scar/WAVE complex containing brk1, scrA, abiA, pirA and napA.

Involved in regulation of actin and microtubule organization. Involved in cell adhesion. The sequence is that of Nck-associated protein 1 homolog (napA) from Dictyostelium discoideum (Social amoeba).